Reading from the N-terminus, the 551-residue chain is Arginine--tRNA ligase (551 aa).

The 'HIGH' region motif lies at 123–133 (ANPTGPLTIGR).

It belongs to the class-I aminoacyl-tRNA synthetase family. As to quaternary structure, monomer.

The protein localises to the cytoplasm. It catalyses the reaction tRNA(Arg) + L-arginine + ATP = L-arginyl-tRNA(Arg) + AMP + diphosphate. This Chlorobium phaeobacteroides (strain DSM 266 / SMG 266 / 2430) protein is Arginine--tRNA ligase.